We begin with the raw amino-acid sequence, 212 residues long: MDSSNSTKETGDIPIPVTSSKSSKAAPPPVVAAKAKSTTKQPLVSGWKRGLGIIDFILRICAIAAALAAATAMGTTSQQLPFFTQFFQFKADYNDLPAFTFFVIANAMAGAYLVLSLPFSILCIVRPHILGARLMLLVFDTVAVPLVTAAASAAASIVYLAHNGNSDANWVAICRQFNDFCQRVSGAVVASFITALLFVVLVAVSAVALRQK.

A disordered region spans residues 1-28; it reads MDSSNSTKETGDIPIPVTSSKSSKAAPP. Topologically, residues 1–49 are cytoplasmic; it reads MDSSNSTKETGDIPIPVTSSKSSKAAPPPVVAAKAKSTTKQPLVSGWKR. The segment covering 16 to 28 has biased composition (low complexity); that stretch reads PVTSSKSSKAAPP. Residues 50–70 traverse the membrane as a helical segment; it reads GLGIIDFILRICAIAAALAAA. The Extracellular portion of the chain corresponds to 71 to 100; sequence TAMGTTSQQLPFFTQFFQFKADYNDLPAFT. A helical membrane pass occupies residues 101-121; that stretch reads FFVIANAMAGAYLVLSLPFSI. The Cytoplasmic segment spans residues 122 to 133; it reads LCIVRPHILGAR. Residues 134–154 traverse the membrane as a helical segment; sequence LMLLVFDTVAVPLVTAAASAA. Over 155 to 186 the chain is Extracellular; the sequence is ASIVYLAHNGNSDANWVAICRQFNDFCQRVSG. The helical transmembrane segment at 187-207 threads the bilayer; sequence AVVASFITALLFVVLVAVSAV. Over 208–212 the chain is Cytoplasmic; sequence ALRQK.

It belongs to the Casparian strip membrane proteins (CASP) family. Homodimer and heterodimers.

The protein resides in the cell membrane. In terms of biological role, regulates membrane-cell wall junctions and localized cell wall deposition. Required for establishment of the Casparian strip membrane domain (CSD) and the subsequent formation of Casparian strips, a cell wall modification of the root endodermis that determines an apoplastic barrier between the intraorganismal apoplasm and the extraorganismal apoplasm and prevents lateral diffusion. In Helianthus annuus (Common sunflower), this protein is Casparian strip membrane protein 1.